The chain runs to 409 residues: Snake venom metalloproteinase BITM02A (409 aa).

The first 20 residues, 1–20, serve as a signal peptide directing secretion; sequence MIEVLLVTICLAAFPYQGSS. The propeptide occupies 21-189; that stretch reads IILESGNVND…KKASQSNLTP (169 aa). The Peptidase M12B domain occupies 193 to 389; that stretch reads RYIELFIVVD…ENPQCILNKR (197 aa). Ca(2+) is bound by residues glutamate 196 and aspartate 280. Intrachain disulfides connect cysteine 304–cysteine 384, cysteine 344–cysteine 368, and cysteine 346–cysteine 351. Histidine 329 provides a ligand contact to Zn(2+). The active site involves glutamate 330. Residues histidine 333 and histidine 339 each contribute to the Zn(2+) site. Residues cysteine 384, asparagine 387, valine 399, asparagine 402, leucine 404, glutamate 406, and glutamate 409 each contribute to the Ca(2+) site. A propeptide spanning residues 390–409 is cleaved from the precursor; it reads LRTDTVSTPVSGNELLEAGE.

This sequence belongs to the venom metalloproteinase (M12B) family. P-I subfamily. In terms of assembly, monomer. Zn(2+) serves as cofactor. As to expression, expressed by the venom gland.

Its subcellular location is the secreted. Functionally, snake venom metalloproteinase that impairs hemostasis in the envenomed animal. The polypeptide is Snake venom metalloproteinase BITM02A (Bothrops insularis (Golden lancehead)).